The following is a 650-amino-acid chain: DNA-directed RNA polymerase III subunit rpc3 (650 aa).

Disordered regions lie at residues 133 to 163, 264 to 283, 288 to 313, and 400 to 440; these read PTAV…EGHT, RGAK…KKAR, AVDE…NIPM, and LAGS…SSDG. Residues 149 to 158 are compositionally biased toward acidic residues; it reads GEGVEGEGIE. Over residues 288 to 307 the composition is skewed to acidic residues; the sequence is AVDEDEEEEEENEWSEDEMG. Positions 577-598 are leucine-zipper; it reads TYKSMSRCLQRLRFERNRLKEF.

The protein belongs to the RNA polymerase beta chain family. As to quaternary structure, component of the RNA polymerase III (Pol III) complex consisting of 17 subunits.

It localises to the nucleus. Functionally, DNA-dependent RNA polymerase catalyzes the transcription of DNA into RNA using the four ribonucleoside triphosphates as substrates. Specific core component of RNA polymerase III which synthesizes small RNAs, such as 5S rRNA and tRNAs. This chain is DNA-directed RNA polymerase III subunit rpc3 (rpc82), found in Aspergillus terreus (strain NIH 2624 / FGSC A1156).